Consider the following 259-residue polypeptide: Exotoxin A regulatory protein (259 aa).

Its subcellular location is the cell inner membrane. Functionally, positive regulation of toxA gene transcription. The polypeptide is Exotoxin A regulatory protein (toxR) (Pseudomonas aeruginosa (strain ATCC 15692 / DSM 22644 / CIP 104116 / JCM 14847 / LMG 12228 / 1C / PRS 101 / PAO1)).